Reading from the N-terminus, the 433-residue chain is Probable dipeptidase (433 aa).

C20 is an active-site residue.

This sequence belongs to the peptidase C69 family.

It carries out the reaction an L-aminoacyl-L-amino acid + H2O = 2 an L-alpha-amino acid. The polypeptide is Probable dipeptidase (pipD) (Salmonella dublin).